A 146-amino-acid chain; its full sequence is uncharacterized protein (146 aa).

Residues F7 to N27 traverse the membrane as a helical segment.

It belongs to the asfivirus E146L family.

The protein localises to the host membrane. The protein resides in the virion. This is an uncharacterized protein from Ornithodoros (relapsing fever ticks).